The following is a 188-amino-acid chain: NADH-quinone oxidoreductase subunit B (188 aa).

[4Fe-4S] cluster-binding residues include Cys-67, Cys-68, Cys-132, and Cys-162.

It belongs to the complex I 20 kDa subunit family. In terms of assembly, NDH-1 is composed of 14 different subunits. Subunits NuoB, C, D, E, F, and G constitute the peripheral sector of the complex. The cofactor is [4Fe-4S] cluster.

It localises to the cell inner membrane. It catalyses the reaction a quinone + NADH + 5 H(+)(in) = a quinol + NAD(+) + 4 H(+)(out). In terms of biological role, NDH-1 shuttles electrons from NADH, via FMN and iron-sulfur (Fe-S) centers, to quinones in the respiratory chain. Couples the redox reaction to proton translocation (for every two electrons transferred, four hydrogen ions are translocated across the cytoplasmic membrane), and thus conserves the redox energy in a proton gradient. The chain is NADH-quinone oxidoreductase subunit B from Maricaulis maris (strain MCS10) (Caulobacter maris).